The chain runs to 375 residues: Chaperone protein DnaJ (375 aa).

The J domain maps to 5-70 (DYYEVLGVNR…RKRASYDQFG (66 aa)). The CR-type zinc-finger motif lies at 133-211 (GLSRTIKVPT…CHGQGRQQQT (79 aa)). Residues Cys146, Cys149, Cys163, Cys166, Cys185, Cys188, Cys199, and Cys202 each coordinate Zn(2+). 4 CXXCXGXG motif repeats span residues 146 to 153 (CKTCNGSG), 163 to 170 (CPRCNGSG), 185 to 192 (CSVCRGRG), and 199 to 206 (CTDCHGQG).

This sequence belongs to the DnaJ family. Homodimer. Zn(2+) serves as cofactor.

It is found in the cytoplasm. Functionally, participates actively in the response to hyperosmotic and heat shock by preventing the aggregation of stress-denatured proteins and by disaggregating proteins, also in an autonomous, DnaK-independent fashion. Unfolded proteins bind initially to DnaJ; upon interaction with the DnaJ-bound protein, DnaK hydrolyzes its bound ATP, resulting in the formation of a stable complex. GrpE releases ADP from DnaK; ATP binding to DnaK triggers the release of the substrate protein, thus completing the reaction cycle. Several rounds of ATP-dependent interactions between DnaJ, DnaK and GrpE are required for fully efficient folding. Also involved, together with DnaK and GrpE, in the DNA replication of plasmids through activation of initiation proteins. This is Chaperone protein DnaJ from Coxiella burnetii (strain CbuK_Q154) (Coxiella burnetii (strain Q154)).